The following is a 245-amino-acid chain: tRNA (guanine-N(1)-)-methyltransferase (245 aa).

S-adenosyl-L-methionine-binding positions include Gly-114 and 133 to 138; that span reads IGDYVL.

The protein belongs to the RNA methyltransferase TrmD family. Homodimer.

It localises to the cytoplasm. The catalysed reaction is guanosine(37) in tRNA + S-adenosyl-L-methionine = N(1)-methylguanosine(37) in tRNA + S-adenosyl-L-homocysteine + H(+). In terms of biological role, specifically methylates guanosine-37 in various tRNAs. This chain is tRNA (guanine-N(1)-)-methyltransferase, found in Prochlorococcus marinus (strain MIT 9312).